Reading from the N-terminus, the 500-residue chain is Aspartyl/glutamyl-tRNA(Asn/Gln) amidotransferase subunit B (500 aa).

It belongs to the GatB/GatE family. GatB subfamily. As to quaternary structure, heterotrimer of A, B and C subunits.

The enzyme catalyses L-glutamyl-tRNA(Gln) + L-glutamine + ATP + H2O = L-glutaminyl-tRNA(Gln) + L-glutamate + ADP + phosphate + H(+). The catalysed reaction is L-aspartyl-tRNA(Asn) + L-glutamine + ATP + H2O = L-asparaginyl-tRNA(Asn) + L-glutamate + ADP + phosphate + 2 H(+). Functionally, allows the formation of correctly charged Asn-tRNA(Asn) or Gln-tRNA(Gln) through the transamidation of misacylated Asp-tRNA(Asn) or Glu-tRNA(Gln) in organisms which lack either or both of asparaginyl-tRNA or glutaminyl-tRNA synthetases. The reaction takes place in the presence of glutamine and ATP through an activated phospho-Asp-tRNA(Asn) or phospho-Glu-tRNA(Gln). In Rhizobium leguminosarum bv. trifolii (strain WSM2304), this protein is Aspartyl/glutamyl-tRNA(Asn/Gln) amidotransferase subunit B.